The following is a 535-amino-acid chain: NEDD8-activating enzyme E1 regulatory subunit (535 aa).

The interaction with UBA3 stretch occupies residues 332 to 345 (DMIADSSKFIKLQN).

The protein belongs to the ubiquitin-activating E1 family. ULA1 subfamily. In terms of assembly, heterodimer of UBA3 and NAE1. The complex binds NEDD8 and UBE2M.

It functions in the pathway protein modification; protein neddylation. Functionally, regulatory subunit of the dimeric UBA3-NAE1 E1 enzyme. E1 activates NEDD8 by first adenylating its C-terminal glycine residue with ATP, thereafter linking this residue to the side chain of the catalytic cysteine, yielding a NEDD8-UBA3 thioester and free AMP. E1 finally transfers NEDD8 to the catalytic cysteine of UBE2M. The covalent attachment of NEDD8 to target proteins is known as 'neddylation' and the process is involved in the regulation of cell growth, viability and development. The protein is NEDD8-activating enzyme E1 regulatory subunit (NAE1) of Gallus gallus (Chicken).